The chain runs to 618 residues: Membrane protein insertase YidC (618 aa).

6 helical membrane-spanning segments follow: residues 3–23 (KNTI…SFLS), 363–383 (WGLS…IVVF), 439–459 (LPML…PSAI), 478–498 (FITF…FCLL), 520–540 (PQMA…LFVL), and 545–565 (SGLN…MIIL).

It belongs to the OXA1/ALB3/YidC family. Type 1 subfamily. In terms of assembly, interacts with the Sec translocase complex via SecD. Specifically interacts with transmembrane segments of nascent integral membrane proteins during membrane integration.

It is found in the cell membrane. Its function is as follows. Required for the insertion and/or proper folding and/or complex formation of integral membrane proteins into the membrane. Involved in integration of membrane proteins that insert both dependently and independently of the Sec translocase complex, as well as at least some lipoproteins. Aids folding of multispanning membrane proteins. The chain is Membrane protein insertase YidC from Bacteroides fragilis (strain YCH46).